Consider the following 622-residue polypeptide: 1-deoxy-D-xylulose-5-phosphate synthase (622 aa).

Thiamine diphosphate is bound by residues His80 and 121-123 (GHS). Asp152 is a Mg(2+) binding site. Thiamine diphosphate contacts are provided by residues 153–154 (GA), Asn181, Tyr288, and Glu370. Asn181 contributes to the Mg(2+) binding site.

It belongs to the transketolase family. DXPS subfamily. Homodimer. Mg(2+) is required as a cofactor. The cofactor is thiamine diphosphate.

It carries out the reaction D-glyceraldehyde 3-phosphate + pyruvate + H(+) = 1-deoxy-D-xylulose 5-phosphate + CO2. Its pathway is metabolic intermediate biosynthesis; 1-deoxy-D-xylulose 5-phosphate biosynthesis; 1-deoxy-D-xylulose 5-phosphate from D-glyceraldehyde 3-phosphate and pyruvate: step 1/1. Catalyzes the acyloin condensation reaction between C atoms 2 and 3 of pyruvate and glyceraldehyde 3-phosphate to yield 1-deoxy-D-xylulose-5-phosphate (DXP). The polypeptide is 1-deoxy-D-xylulose-5-phosphate synthase (Hamiltonella defensa subsp. Acyrthosiphon pisum (strain 5AT)).